Consider the following 302-residue polypeptide: 1D-myo-inositol 2-acetamido-2-deoxy-alpha-D-glucopyranoside deacetylase (302 aa).

His12, Asp15, and His147 together coordinate Zn(2+).

This sequence belongs to the MshB deacetylase family. It depends on Zn(2+) as a cofactor.

The enzyme catalyses 1D-myo-inositol 2-acetamido-2-deoxy-alpha-D-glucopyranoside + H2O = 1D-myo-inositol 2-amino-2-deoxy-alpha-D-glucopyranoside + acetate. In terms of biological role, catalyzes the deacetylation of 1D-myo-inositol 2-acetamido-2-deoxy-alpha-D-glucopyranoside (GlcNAc-Ins) in the mycothiol biosynthesis pathway. In Thermobispora bispora (strain ATCC 19993 / DSM 43833 / CBS 139.67 / JCM 10125 / KCTC 9307 / NBRC 14880 / R51), this protein is 1D-myo-inositol 2-acetamido-2-deoxy-alpha-D-glucopyranoside deacetylase.